A 122-amino-acid polypeptide reads, in one-letter code: Large ribosomal subunit protein uL14 (122 aa).

This sequence belongs to the universal ribosomal protein uL14 family. As to quaternary structure, part of the 50S ribosomal subunit. Forms a cluster with proteins L3 and L19. In the 70S ribosome, L14 and L19 interact and together make contacts with the 16S rRNA in bridges B5 and B8.

Its function is as follows. Binds to 23S rRNA. Forms part of two intersubunit bridges in the 70S ribosome. The chain is Large ribosomal subunit protein uL14 from Campylobacter hominis (strain ATCC BAA-381 / DSM 21671 / CCUG 45161 / LMG 19568 / NCTC 13146 / CH001A).